Here is a 135-residue protein sequence, read N- to C-terminus: Protein Wnt-7a (135 aa).

Disulfide bonds link C3/C17 and C5/C12. A lipid anchor (O-palmitoleoyl serine; by PORCN) is attached at S9. Residues 41–69 are disordered linker; the sequence is VEPVRASRNKRPTFLKIKKPLSYRKPMDT. Cystine bridges form between C81-C112, C97-C107, C111-C134, and C130-C131. N98 carries N-linked (GlcNAc...) asparagine glycosylation.

Belongs to the Wnt family. Post-translationally, palmitoleoylation is required for efficient binding to frizzled receptors. Depalmitoleoylation leads to Wnt signaling pathway inhibition. In terms of tissue distribution, in embryo, in brain and ventral neural tube; in adults, in brain.

Its subcellular location is the secreted. It localises to the extracellular space. The protein localises to the extracellular matrix. Functionally, ligand for members of the frizzled family of seven transmembrane receptors that functions in the canonical Wnt/beta-catenin signaling pathway. Plays an important role in embryonic development, including dorsal versus ventral patterning during limb development, skeleton development and urogenital tract development. Required for central nervous system (CNS) angiogenesis and blood-brain barrier regulation. The polypeptide is Protein Wnt-7a (wnt7a) (Xenopus laevis (African clawed frog)).